A 152-amino-acid polypeptide reads, in one-letter code: S-protein homolog 4 (152 aa).

Positions 1–23 are cleaved as a signal peptide; sequence MTTMLKTQVHVVVIYLLIQIAFS. Asn71 is a glycosylation site (N-linked (GlcNAc...) asparagine).

Belongs to the plant self-incompatibility (S1) protein family.

The protein localises to the secreted. This is S-protein homolog 4 from Arabidopsis thaliana (Mouse-ear cress).